The sequence spans 360 residues: S-adenosylmethionine:tRNA ribosyltransferase-isomerase (360 aa).

Belongs to the QueA family. In terms of assembly, monomer.

Its subcellular location is the cytoplasm. It carries out the reaction 7-aminomethyl-7-carbaguanosine(34) in tRNA + S-adenosyl-L-methionine = epoxyqueuosine(34) in tRNA + adenine + L-methionine + 2 H(+). It functions in the pathway tRNA modification; tRNA-queuosine biosynthesis. Functionally, transfers and isomerizes the ribose moiety from AdoMet to the 7-aminomethyl group of 7-deazaguanine (preQ1-tRNA) to give epoxyqueuosine (oQ-tRNA). This Rhizobium rhizogenes (strain K84 / ATCC BAA-868) (Agrobacterium radiobacter) protein is S-adenosylmethionine:tRNA ribosyltransferase-isomerase.